We begin with the raw amino-acid sequence, 291 residues long: Diaminopimelate epimerase (291 aa).

Residues Asn-13, Gln-46, and Asn-66 each coordinate substrate. The active-site Proton donor is Cys-75. Residues 76 to 77 (GN), Asn-170, Asn-203, and 221 to 222 (ER) contribute to the substrate site. Cys-230 (proton acceptor) is an active-site residue. 231–232 (GS) provides a ligand contact to substrate.

Belongs to the diaminopimelate epimerase family. In terms of assembly, homodimer.

It is found in the cytoplasm. The catalysed reaction is (2S,6S)-2,6-diaminopimelate = meso-2,6-diaminopimelate. It functions in the pathway amino-acid biosynthesis; L-lysine biosynthesis via DAP pathway; DL-2,6-diaminopimelate from LL-2,6-diaminopimelate: step 1/1. Functionally, catalyzes the stereoinversion of LL-2,6-diaminopimelate (L,L-DAP) to meso-diaminopimelate (meso-DAP), a precursor of L-lysine and an essential component of the bacterial peptidoglycan. The protein is Diaminopimelate epimerase of Albidiferax ferrireducens (strain ATCC BAA-621 / DSM 15236 / T118) (Rhodoferax ferrireducens).